The primary structure comprises 86 residues: MAHKKGSGSTRNGRDSNSKRLGVKKYGGEQVTAGNILIRQRGTKVKPGQNVGKGKDDTLFALIDGFVLFEKSNQKQKTISVYSSKN.

Residues 1-27 (MAHKKGSGSTRNGRDSNSKRLGVKKYG) form a disordered region.

The protein belongs to the bacterial ribosomal protein bL27 family.

It is found in the plastid. It localises to the chloroplast. In Porphyra purpurea (Red seaweed), this protein is Large ribosomal subunit protein bL27c (rpl27).